The following is a 387-amino-acid chain: GTPase Obg (387 aa).

An Obg domain is found at 1–159 (MKFVDEAIIR…RSLKLELLLL (159 aa)). The 174-residue stretch at 160–333 (ADVGLLGMPN…LAVKLLDFIA (174 aa)) folds into the OBG-type G domain. Residues 166–173 (GMPNAGKS), 191–195 (FTTLV), 213–216 (DIPG), 283–286 (NKAD), and 314–316 (SAY) contribute to the GTP site. Mg(2+)-binding residues include Ser-173 and Thr-193.

It belongs to the TRAFAC class OBG-HflX-like GTPase superfamily. OBG GTPase family. As to quaternary structure, monomer. Mg(2+) is required as a cofactor.

It is found in the cytoplasm. Its function is as follows. An essential GTPase which binds GTP, GDP and possibly (p)ppGpp with moderate affinity, with high nucleotide exchange rates and a fairly low GTP hydrolysis rate. Plays a role in control of the cell cycle, stress response, ribosome biogenesis and in those bacteria that undergo differentiation, in morphogenesis control. This Shewanella halifaxensis (strain HAW-EB4) protein is GTPase Obg.